A 178-amino-acid chain; its full sequence is Large ribosomal subunit protein bL25 (178 aa).

Belongs to the bacterial ribosomal protein bL25 family. CTC subfamily. As to quaternary structure, part of the 50S ribosomal subunit; part of the 5S rRNA/L5/L18/L25 subcomplex. Contacts the 5S rRNA. Binds to the 5S rRNA independently of L5 and L18.

Its function is as follows. This is one of the proteins that binds to the 5S RNA in the ribosome where it forms part of the central protuberance. The chain is Large ribosomal subunit protein bL25 from Helicobacter pylori (strain P12).